A 457-amino-acid chain; its full sequence is Bifunctional protein GlmU (457 aa).

Positions 1–230 are pyrophosphorylase; the sequence is MSKRYAVVLA…FEESLGVNDR (230 aa). UDP-N-acetyl-alpha-D-glucosamine is bound by residues 9-12, Lys23, Gln73, and 78-79; these read LAAG and GT. Asp103 is a Mg(2+) binding site. Residues Gly140, Glu155, Asn170, and Asn228 each coordinate UDP-N-acetyl-alpha-D-glucosamine. Asn228 lines the Mg(2+) pocket. A linker region spans residues 231-251; that stretch reads IALAEASRLMQRRINENHMRN. Residues 252–457 are N-acetyltransferase; sequence GVTLVNPENT…GYAKHLNHGK (206 aa). The UDP-N-acetyl-alpha-D-glucosamine site is built by Arg333 and Lys351. His363 acts as the Proton acceptor in catalysis. 2 residues coordinate UDP-N-acetyl-alpha-D-glucosamine: Tyr366 and Asn377. Residues 386–387, Ala423, and Arg440 each bind acetyl-CoA; that span reads NY.

This sequence in the N-terminal section; belongs to the N-acetylglucosamine-1-phosphate uridyltransferase family. The protein in the C-terminal section; belongs to the transferase hexapeptide repeat family. As to quaternary structure, homotrimer. Mg(2+) is required as a cofactor.

The protein localises to the cytoplasm. The catalysed reaction is alpha-D-glucosamine 1-phosphate + acetyl-CoA = N-acetyl-alpha-D-glucosamine 1-phosphate + CoA + H(+). It carries out the reaction N-acetyl-alpha-D-glucosamine 1-phosphate + UTP + H(+) = UDP-N-acetyl-alpha-D-glucosamine + diphosphate. It functions in the pathway nucleotide-sugar biosynthesis; UDP-N-acetyl-alpha-D-glucosamine biosynthesis; N-acetyl-alpha-D-glucosamine 1-phosphate from alpha-D-glucosamine 6-phosphate (route II): step 2/2. It participates in nucleotide-sugar biosynthesis; UDP-N-acetyl-alpha-D-glucosamine biosynthesis; UDP-N-acetyl-alpha-D-glucosamine from N-acetyl-alpha-D-glucosamine 1-phosphate: step 1/1. The protein operates within bacterial outer membrane biogenesis; LPS lipid A biosynthesis. Functionally, catalyzes the last two sequential reactions in the de novo biosynthetic pathway for UDP-N-acetylglucosamine (UDP-GlcNAc). The C-terminal domain catalyzes the transfer of acetyl group from acetyl coenzyme A to glucosamine-1-phosphate (GlcN-1-P) to produce N-acetylglucosamine-1-phosphate (GlcNAc-1-P), which is converted into UDP-GlcNAc by the transfer of uridine 5-monophosphate (from uridine 5-triphosphate), a reaction catalyzed by the N-terminal domain. The chain is Bifunctional protein GlmU from Listeria monocytogenes serotype 4b (strain F2365).